The following is a 103-amino-acid chain: Large ribosomal subunit protein bL21 (103 aa).

It belongs to the bacterial ribosomal protein bL21 family. Part of the 50S ribosomal subunit. Contacts protein L20.

Functionally, this protein binds to 23S rRNA in the presence of protein L20. This is Large ribosomal subunit protein bL21 from Mycobacterium tuberculosis (strain ATCC 25618 / H37Rv).